Here is a 959-residue protein sequence, read N- to C-terminus: UPF0182 protein MAE_41360 (959 aa).

9 helical membrane-spanning segments follow: residues 13-33 (PILL…VVAN), 50-70 (LSWQ…FIFT), 99-119 (LLGL…MLLY), 156-176 (DISS…GLLI), 184-204 (IISI…WANF), 239-259 (LWLT…YLFS), 276-296 (LRHL…HHII), 319-339 (VGQF…IWLG), and 362-382 (FFPY…GTII).

This sequence belongs to the UPF0182 family.

It is found in the cell membrane. This is UPF0182 protein MAE_41360 from Microcystis aeruginosa (strain NIES-843 / IAM M-2473).